The primary structure comprises 496 residues: Cytochrome P450 71D180 (496 aa).

The helical; Signal-anchor for type II membrane protein transmembrane segment at 1 to 21 threads the bilayer; sequence MDISISWVVIIVFVLSYLILM. C435 serves as a coordination point for heme. The disordered stretch occupies residues 471 to 496; sequence MSETPGLSGPRKNPLIMIPTIHNPTS.

This sequence belongs to the cytochrome P450 family. Heme serves as cofactor. As to expression, mostly expressed in flowers and stems, and, to a lower extent, in leaves.

The protein resides in the membrane. It catalyses the reaction gamma-terpinene + 2 reduced [NADPH--hemoprotein reductase] + 2 O2 = carvacrol + 2 oxidized [NADPH--hemoprotein reductase] + 3 H2O + 2 H(+). The enzyme catalyses (4S)-limonene + reduced [NADPH--hemoprotein reductase] + O2 = (1S,5R)-carveol + oxidized [NADPH--hemoprotein reductase] + H2O + H(+). The catalysed reaction is (4R)-limonene + reduced [NADPH--hemoprotein reductase] + O2 = (1R,5S)-carveol + oxidized [NADPH--hemoprotein reductase] + H2O + H(+). The protein operates within secondary metabolite biosynthesis; terpenoid biosynthesis. Functionally, involved in the biosynthesis of phenolic monoterpenes natural products thymol and carvacrol which have a broad range of biological activities acting as antimicrobial compounds, insecticides, antioxidants and pharmaceutical agents. Catalyzes the C2-hydroxylation of gamma-terpinene to produce carvacrol. Also mediates the C6-hydroxylation of (4S)-limonene and (4R)-limonene to form carveol. The polypeptide is Cytochrome P450 71D180 (Origanum vulgare (Wild marjoram)).